The following is a 512-amino-acid chain: Threonine synthase (512 aa).

Position 121 is an N6-(pyridoxal phosphate)lysine (Lys121). Positions 273, 274, 275, 277, and 445 each coordinate pyridoxal 5'-phosphate.

The protein belongs to the threonine synthase family. Requires pyridoxal 5'-phosphate as cofactor.

It catalyses the reaction O-phospho-L-homoserine + H2O = L-threonine + phosphate. It functions in the pathway amino-acid biosynthesis; L-threonine biosynthesis; L-threonine from L-aspartate: step 5/5. Catalyzes the gamma-elimination of phosphate from L-phosphohomoserine and the beta-addition of water to produce L-threonine. This is Threonine synthase (THR4) from Eremothecium gossypii (strain ATCC 10895 / CBS 109.51 / FGSC 9923 / NRRL Y-1056) (Yeast).